The chain runs to 530 residues: Estrogen receptor beta (530 aa).

The modulating stretch occupies residues 1 to 148 (MEIKNSPSSL…SPNAKRDAHF (148 aa)). S61 bears the Phosphoserine; alternate mark. S61 is a glycosylation site (O-linked (GlcNAc) serine; alternate). Phosphoserine; by MAPK is present on residues S87 and S105. NR C4-type zinc fingers lie at residues 149–169 (CPVCSDYASGYHYGVWSCEGC) and 185–209 (CPATNQCTIDKNRRKSCQACRLRKC). Positions 149 to 214 (CPVCSDYASG…RLRKCYEVGM (66 aa)) form a DNA-binding region, nuclear receptor. An NR LBD domain is found at 264-498 (SPEQLVLTLL…DLLLEMLNAH (235 aa)). Over residues 506–515 (SISGSECSST) the composition is skewed to low complexity. The disordered stretch occupies residues 506–530 (SISGSECSSTEDSKNKESSQNLQSQ).

It belongs to the nuclear hormone receptor family. NR3 subfamily. In terms of assembly, binds DNA as a homodimer. Can form a heterodimer with ESR1. Interacts with NCOA1, NCOA3, NCOA5 and NCOA6 coactivators, leading to a strong increase of transcription of target genes. Interacts with UBE1C and AKAP13. Interacts with DNTTIP2. Interacts with CCDC62 in the presence of estradiol/E2; this interaction seems to enhance the transcription of target genes. Interacts with PRMT2. Interacts with CCAR2 (via N-terminus) in a ligand-independent manner. Interacts with DNAAF4. Interacts with RBM39, in the presence of estradiol (E2). Interacts with STUB1/CHIP. Phosphorylation at Ser-87 and Ser-105 recruits NCOA1. In terms of tissue distribution, expressed in the CA1 region of the hippocampus, expression decreases with age (at protein level). Expressed in prostate, ovary, lung, liver, kidney, fat, bone, brain, uterus and testis.

It localises to the nucleus. Nuclear hormone receptor. Binds estrogens with an affinity similar to that of ESR1/ER-alpha, and activates expression of reporter genes containing estrogen response elements (ERE) in an estrogen-dependent manner. Functionally, lacks ligand binding affinity and suppresses ESR1/ER-alpha and ESR2 isoform 1/ER-beta1 mediated transcriptional activation and may act as a dominant negative regulator of estrogen action. In terms of biological role, unable to bind DNA and activate transcription due to the truncation of the DNA binding domain. In Rattus norvegicus (Rat), this protein is Estrogen receptor beta (Esr2).